A 417-amino-acid polypeptide reads, in one-letter code: Tyrosine--tRNA ligase (417 aa).

Tyr-36 lines the L-tyrosine pocket. The short motif at 41 to 50 (PTADSLHIGH) is the 'HIGH' region element. Tyr-170 and Gln-174 together coordinate L-tyrosine. Positions 231-235 (KFGKS) match the 'KMSKS' region motif. Lys-234 contributes to the ATP binding site. Positions 351 to 417 (TNLVELLIEA…GKKKYFMIIH (67 aa)) constitute an S4 RNA-binding domain.

It belongs to the class-I aminoacyl-tRNA synthetase family. TyrS type 1 subfamily. Homodimer.

It is found in the cytoplasm. It catalyses the reaction tRNA(Tyr) + L-tyrosine + ATP = L-tyrosyl-tRNA(Tyr) + AMP + diphosphate + H(+). Catalyzes the attachment of tyrosine to tRNA(Tyr) in a two-step reaction: tyrosine is first activated by ATP to form Tyr-AMP and then transferred to the acceptor end of tRNA(Tyr). The protein is Tyrosine--tRNA ligase of Macrococcus caseolyticus (strain JCSC5402) (Macrococcoides caseolyticum).